The primary structure comprises 265 residues: Regulator of calcineurin 2 (265 aa).

Residues Ser104 and Ser110 each carry the phosphoserine modification. 2 disordered regions span residues 127 to 213 (LLSI…DKSA) and 242 to 265 (ENDV…EFFH). Position 132 is a phosphothreonine (Thr132). Low complexity-rich tracts occupy residues 141 to 161 (SSSL…LESP) and 182 to 202 (LSRS…QTSL). Ser152, Ser157, Ser160, Ser183, Ser187, Ser193, Ser201, and Ser255 each carry phosphoserine.

Phosphorylation of Ser-152 and Ser-160 is induced 2-fold in response to mating pheromone.

It localises to the cytoplasm. This chain is Regulator of calcineurin 2 (RCN2), found in Saccharomyces cerevisiae (strain ATCC 204508 / S288c) (Baker's yeast).